Reading from the N-terminus, the 480-residue chain is Pre-glycoprotein polyprotein GP complex (480 aa).

Residue glycine 2 is the site of N-myristoyl glycine; by host attachment. Residues 2-17 (GQLVSFFQEIPVFFQE) lie on the Extracellular side of the membrane. A helical transmembrane segment spans residues 18 to 33 (ALNIALAVVTLLAIVK). The Cytoplasmic portion of the chain corresponds to 34 to 58 (GVLNLWKSGLFQLLMFLILAGRSCS). Cysteine 57 contributes to the Zn(2+) binding site. Over 59–419 (FRIGYHTSFE…QGRTPLTLVD (361 aa)) the chain is Extracellular. 4 disulfides stabilise this stretch: cysteine 85/cysteine 221, cysteine 266/cysteine 279, cysteine 288/cysteine 297, and cysteine 351/cysteine 372. Residues asparagine 88, asparagine 174, and asparagine 214 are each glycosylated (N-linked (GlcNAc...) asparagine; by host). N-linked (GlcNAc...) asparagine; by host glycosylation is found at asparagine 352, asparagine 360, asparagine 377, and asparagine 382. Residues 420–440 (LCFWSAVFYTTTLFLHLVGFP) form a helical membrane-spanning segment. Residues 441–480 (THRHISGEPCPLPHRLNRHGACNCGRFKRLKKPLVWYKHH) lie on the Cytoplasmic side of the membrane. Residues histidine 442, histidine 444, cysteine 450, histidine 454, cysteine 462, cysteine 464, and histidine 480 each coordinate Zn(2+).

Belongs to the arenaviridae GPC protein family. As to quaternary structure, interacts with glycoprotein G2. Part of the GP complex (GP-C) together with glycoprotein G1 and glycoprotein G2. The GP-complex interacts with protein Z, which interacts with ribonucleocapsid; these interactions may induce virion budding. In terms of assembly, homotrimer; disulfide-linked. In pre-fusion state, G1 homotrimers bind G2 homotrimers via ionic interactions. Part of the GP complex (GP-C) together with glycoprotein G2 and the stable signal peptide. The GP-complex interacts with protein Z, which interacts with ribonucleocapsid; these interactions may induce virion budding. Homotrimer. Interacts with the stable signal peptide. In pre-fusion state, G2 homotrimers bind G1 homotrimers via ionic interactions. Part of the GP complex (GP-C) together with glycoprotein G1 and the stable signal peptide. Acidification in the endosome triggers rearrangements, which ultimately leads to a 6 helix bundle formed by the two heptad repeat domains (HR1 and HR2) in post-fusion state. The GP-complex interacts with protein Z, which interacts with ribonucleocapsid; these interactions may induce virion budding. In terms of processing, specific enzymatic cleavages in vivo yield mature proteins. GP-C polyprotein is cleaved in the endoplasmic reticulum by the host protease MBTPS1. Only cleaved glycoprotein is incorporated into virions. The SSP remains stably associated with the GP complex following cleavage by signal peptidase and plays crucial roles in the trafficking of GP through the secretory pathway. Post-translationally, myristoylation is necessary for GP2-mediated fusion activity.

It is found in the virion membrane. It localises to the host endoplasmic reticulum membrane. The protein localises to the host Golgi apparatus membrane. Its subcellular location is the host cell membrane. Functions as a cleaved signal peptide that is retained as the third component of the GP complex (GP-C). Helps to stabilize the spike complex in its native conformation. The SSP is required for efficient glycoprotein expression, post-translational maturation cleavage of G1 and G2, glycoprotein transport to the cell surface plasma membrane, formation of infectious virus particles, and acid pH-dependent glycoprotein-mediated cell fusion. Its function is as follows. Forms the virion spikes together with glycoprotein G2. The glycoprotein spike trimers are connected to the underlying matrix. Interacts with the host receptor leading to virus endocytosis. Functionally, forms the virion spikes together with glycoprotein G1. The glycoprotein spike trimers are connected to the underlying matrix. Class I viral fusion protein that directs fusion of viral and host endosomal membranes, leading to delivery of the nucleocapsid into the cytoplasm. Membrane fusion is mediated by irreversible conformational changes induced by acidification. This is Pre-glycoprotein polyprotein GP complex from Cupixi mammarenavirus (isolate Rat/Brasil/BeAn 119303/1970) (CPXV).